The sequence spans 400 residues: MSVIYLDNNATTKVDPDVVEAIMPYLTDYYGNPSSMHTFGGQLGKAVRTAREQVAALLGADESEIVFTSCGTEGDNAAIRAALLAQPEKRHIITTQVEHPAVLNVCKQLETQGYTVTYLSVNSHGQLDLDELEASLTGNTALVTIMYANNETGTVFPIEEIGKRVKERGAIFHVDAVQAVGKIPLNMKTSTIDMLTISGHKIHAPKGIGALYVRRGVRFRPLLIGGHQERGRRAGTENVPGIVGLGKAAELELIHIETAIKKETRLRDRLEQTLLAKIPDCEVNGDITQRLPNTTNIGFKYIEGEAILLSLNKYGICASSGSACTSGSLEPSHVLRAMGLPYTTLHGSIRFSLCRYTTEAQIDRVIEVMPEIVERLRALSPFKNDEAGWLQAQEQTLAHR.

Pyridoxal 5'-phosphate-binding positions include 71–72 (GT), N150, Q178, and 198–200 (SGH). Position 201 is an N6-(pyridoxal phosphate)lysine (K201). T236 is a pyridoxal 5'-phosphate binding site. C324 (cysteine persulfide intermediate) is an active-site residue. C324 lines the [2Fe-2S] cluster pocket.

Belongs to the class-V pyridoxal-phosphate-dependent aminotransferase family. NifS/IscS subfamily. Homodimer. The cofactor is pyridoxal 5'-phosphate.

The catalysed reaction is (sulfur carrier)-H + L-cysteine = (sulfur carrier)-SH + L-alanine. Functionally, catalyzes the removal of elemental sulfur atoms from cysteine to produce alanine. Seems to participate in the biosynthesis of the nitrogenase metalloclusters by providing the inorganic sulfur required for the Fe-S core formation. The polypeptide is Cysteine desulfurase (Nostoc sp. (strain PCC 7120 / SAG 25.82 / UTEX 2576)).